Here is a 563-residue protein sequence, read N- to C-terminus: Rhotekin (563 aa).

Position 14 is an omega-N-methylarginine (arginine 14). The region spanning 17 to 98 is the REM-1 domain; sequence ALEMEFKRGR…LQRRKEAQVL (82 aa). Residues serine 30 and serine 106 each carry the phosphoserine modification. Residues 96 to 116 form a disordered region; the sequence is QVLGKTSRRPSDSGPPAERSP. Arginine 230 is subject to Asymmetric dimethylarginine. A Phosphoserine modification is found at serine 232. Positions 309-416 constitute a PH domain; that stretch reads QPTASGTLRV…WMEALWQLFF (108 aa). The interval 518–563 is disordered; that stretch reads TFSLDAVPPDHSPRARSVAPLPPQRSPRTRGLCSKGQPRTWLQSPV. A phosphoserine mark is found at serine 520, serine 529, and serine 543.

Interacts via its C-terminal region with the TAX1BP3 PDZ domain. This interaction facilitates Rho-mediated activation of the c-Fos serum response element (SRE). Interacts with SEPT9. Specifically binds to GTP-bound RHOA, RHOB and RHOC and inhibits their GTPase activity. In terms of tissue distribution, highly expressed in prostate, moderately in kidney, heart, brain, spleen, testis, placenta, small intestine, pancreas, skeletal muscle and peripheral blood leukocytes, and weakly in ovary, colon and thymus. Weakly expressed in all normal cell lines tested. Overexpressed in various cancer cell lines.

Its function is as follows. Mediates Rho signaling to activate NF-kappa-B and may confer increased resistance to apoptosis to cells in gastric tumorigenesis. May play a novel role in the organization of septin structures. The polypeptide is Rhotekin (Homo sapiens (Human)).